Here is a 266-residue protein sequence, read N- to C-terminus: Small ribosomal subunit protein uS2 (266 aa).

The tract at residues 233-266 is disordered; that stretch reads AVREEEFASAPDAGKKGRQAQPKKGKRASDAAAE. Basic residues predominate over residues 248-258; sequence KGRQAQPKKGK.

This sequence belongs to the universal ribosomal protein uS2 family.

This is Small ribosomal subunit protein uS2 from Xylella fastidiosa (strain M23).